A 174-amino-acid chain; its full sequence is ATP-dependent protease subunit HslV (174 aa).

Thr-2 is a catalytic residue. Na(+)-binding residues include Gly-157, Asp-160, and Thr-163.

The protein belongs to the peptidase T1B family. HslV subfamily. A double ring-shaped homohexamer of HslV is capped on each side by a ring-shaped HslU homohexamer. The assembly of the HslU/HslV complex is dependent on binding of ATP.

Its subcellular location is the cytoplasm. The enzyme catalyses ATP-dependent cleavage of peptide bonds with broad specificity.. Its activity is regulated as follows. Allosterically activated by HslU binding. Functionally, protease subunit of a proteasome-like degradation complex believed to be a general protein degrading machinery. The protein is ATP-dependent protease subunit HslV of Aliivibrio fischeri (strain MJ11) (Vibrio fischeri).